The chain runs to 537 residues: Hexosyltransferase GAUT11 (537 aa).

Residues 1–16 are Cytoplasmic-facing; it reads MRRWPVDHRRRGRRRL. Residues 17-37 form a helical; Signal-anchor for type II membrane protein membrane-spanning segment; sequence SSWIWFLLGSFSVAGLVLFIV. At 38–537 the chain is on the lumenal side; it reads QHYHHQQDPS…HPYLQDCVTA (500 aa). N-linked (GlcNAc...) asparagine glycosylation is found at asparagine 66, asparagine 247, asparagine 299, asparagine 403, asparagine 436, and asparagine 525.

Belongs to the glycosyltransferase 8 family. In terms of assembly, monomer. In terms of tissue distribution, expressed in roots, inflorescences, siliques, seeds, leaves and stems.

It is found in the golgi apparatus membrane. The enzyme catalyses [(1-&gt;4)-alpha-D-galacturonosyl](n) + UDP-alpha-D-galacturonate = [(1-&gt;4)-alpha-D-galacturonosyl](n+1) + UDP + H(+). The protein operates within glycan metabolism; pectin biosynthesis. Its function is as follows. Glycosyltransferase involved in pectin and/or xylans biosynthesis in cell walls. Required for the biosynthesis of pectin in seed coat epidermal (SCE) cells. Collaboratively with MUCI70, essential for the accumulation of seed mucilage, a gelatinous wall rich in unbranched rhamnogalacturonan I (RG I), and for shaping the surface morphology of seeds. Catalyzes homogalacturonan (HG) elongation by acting as an HG alpha-1,4 galacturonic acid transferase. The chain is Hexosyltransferase GAUT11 from Arabidopsis thaliana (Mouse-ear cress).